Here is a 244-residue protein sequence, read N- to C-terminus: MSIFTSFLLLCVVTVVYAETLTEGVQNSCPVVTCSSPGLNGFPGKDGRDGAKGEKGEPGQGLRGLQGPPGKVGPTGPPGNPGLKGAVGPKGDRGDRAEFDTSEIDSEIAALRSELRALRNWVLFSLSEKVGKKYFVSSVKKMSLDRVKALCSEFQGSVATPRNAEENSAIQKVAKDIAYLGITDVRVEGSFEDLTGNRVRYTNWNDGEPNNTGDGEDCVVILGNGKWNDVPCSDSFLAICEFSD.

The N-terminal stretch at 1 to 18 is a signal peptide; it reads MSIFTSFLLLCVVTVVYA. In terms of domain architecture, Collagen-like spans 38-96; it reads GLNGFPGKDGRDGAKGEKGEPGQGLRGLQGPPGKVGPTGPPGNPGLKGAVGPKGDRGDR. The segment at 40 to 101 is disordered; that stretch reads NGFPGKDGRD…DRGDRAEFDT (62 aa). Residue P43 is modified to 4-hydroxyproline. The span at 45–57 shows a compositional bias: basic and acidic residues; sequence KDGRDGAKGEKGE. 4-hydroxyproline is present on residues P58, P69, P78, and P81. Residues 65–74 show a composition bias toward low complexity; that stretch reads LQGPPGKVGP. A compositionally biased stretch (basic and acidic residues) spans 90 to 99; the sequence is KGDRGDRAEF. Residues 108–126 are a coiled coil; sequence IAALRSELRALRNWVLFSL. The 113-residue stretch at 129 to 241 folds into the C-type lectin domain; the sequence is KVGKKYFVSS…CSDSFLAICE (113 aa). Intrachain disulfides connect C151/C240 and C218/C232. N210 carries N-linked (GlcNAc...) asparagine glycosylation.

As to quaternary structure, oligomeric complex of 3 or more homotrimers. Interacts with MASP1 and MASP2. Interacts with MEP1A and MEP1B and may inhibit their catalytic activity. Hydroxylation on proline residues within the sequence motif, GXPG, is most likely to be 4-hydroxy as this fits the requirement for 4-hydroxylation in vertebrates.

The protein resides in the secreted. Its function is as follows. Calcium-dependent lectin involved in innate immune defense. Binds mannose, fucose and N-acetylglucosamine on different microorganisms and activates the lectin complement pathway. Binds to late apoptotic cells, as well as to apoptotic blebs and to necrotic cells, but not to early apoptotic cells, facilitating their uptake by macrophages. This Mus musculus (Mouse) protein is Mannose-binding protein C (Mbl2).